A 206-amino-acid chain; its full sequence is Large ribosomal subunit protein uL4 (206 aa).

Belongs to the universal ribosomal protein uL4 family. Part of the 50S ribosomal subunit.

Its function is as follows. One of the primary rRNA binding proteins, this protein initially binds near the 5'-end of the 23S rRNA. It is important during the early stages of 50S assembly. It makes multiple contacts with different domains of the 23S rRNA in the assembled 50S subunit and ribosome. Functionally, forms part of the polypeptide exit tunnel. This Nitrobacter hamburgensis (strain DSM 10229 / NCIMB 13809 / X14) protein is Large ribosomal subunit protein uL4.